The chain runs to 345 residues: Phosphoribosylformylglycinamidine cyclo-ligase (345 aa).

Belongs to the AIR synthase family.

It localises to the cytoplasm. The enzyme catalyses 2-formamido-N(1)-(5-O-phospho-beta-D-ribosyl)acetamidine + ATP = 5-amino-1-(5-phospho-beta-D-ribosyl)imidazole + ADP + phosphate + H(+). The protein operates within purine metabolism; IMP biosynthesis via de novo pathway; 5-amino-1-(5-phospho-D-ribosyl)imidazole from N(2)-formyl-N(1)-(5-phospho-D-ribosyl)glycinamide: step 2/2. This is Phosphoribosylformylglycinamidine cyclo-ligase from Escherichia coli (strain K12 / MC4100 / BW2952).